A 95-amino-acid chain; its full sequence is Large ribosomal subunit protein bL25 (95 aa).

Belongs to the bacterial ribosomal protein bL25 family. Part of the 50S ribosomal subunit; part of the 5S rRNA/L5/L18/L25 subcomplex. Contacts the 5S rRNA. Binds to the 5S rRNA independently of L5 and L18.

Its function is as follows. This is one of the proteins that binds to the 5S RNA in the ribosome where it forms part of the central protuberance. The sequence is that of Large ribosomal subunit protein bL25 from Actinobacillus succinogenes (strain ATCC 55618 / DSM 22257 / CCUG 43843 / 130Z).